The sequence spans 29 residues: Photosystem I reaction center subunit XII (29 aa).

Residues 7–24 (FVALLLALVPAVLAYRLG) traverse the membrane as a helical segment.

Belongs to the PsaM family.

The protein localises to the cellular thylakoid membrane. This is Photosystem I reaction center subunit XII from Synechococcus sp. (strain ATCC 27144 / PCC 6301 / SAUG 1402/1) (Anacystis nidulans).